A 212-amino-acid polypeptide reads, in one-letter code: MISYLKGSPIEVIKNTNNRVILVLEVNEIGYELQIPSKLGREISQEKLDTIQIFTHVQIKEDQQILYGFSTTAERELFRQLISVSGIGAQSAIALIDTLGLEELVQAIVTGNIRILSQPSGIGRKTAERIALELRTKLSQWRKMVGVTVTSSAAMPSLEILEDIEMTLLALGYTNEEINKAISTLSQDNLMLKNTNTEEWIKEAIAWLSQGT.

A domain I region spans residues 1–70; that stretch reads MISYLKGSPI…EDQQILYGFS (70 aa). Positions 71 to 149 are domain II; it reads TTAERELFRQ…QWRKMVGVTV (79 aa). Residues 150-160 form a flexible linker region; the sequence is TSSAAMPSLEI. The interval 160–212 is domain III; that stretch reads ILEDIEMTLLALGYTNEEINKAISTLSQDNLMLKNTNTEEWIKEAIAWLSQGT.

Belongs to the RuvA family. As to quaternary structure, homotetramer. Forms an RuvA(8)-RuvB(12)-Holliday junction (HJ) complex. HJ DNA is sandwiched between 2 RuvA tetramers; dsDNA enters through RuvA and exits via RuvB. An RuvB hexamer assembles on each DNA strand where it exits the tetramer. Each RuvB hexamer is contacted by two RuvA subunits (via domain III) on 2 adjacent RuvB subunits; this complex drives branch migration. In the full resolvosome a probable DNA-RuvA(4)-RuvB(12)-RuvC(2) complex forms which resolves the HJ.

The protein resides in the cytoplasm. In terms of biological role, the RuvA-RuvB-RuvC complex processes Holliday junction (HJ) DNA during genetic recombination and DNA repair, while the RuvA-RuvB complex plays an important role in the rescue of blocked DNA replication forks via replication fork reversal (RFR). RuvA specifically binds to HJ cruciform DNA, conferring on it an open structure. The RuvB hexamer acts as an ATP-dependent pump, pulling dsDNA into and through the RuvAB complex. HJ branch migration allows RuvC to scan DNA until it finds its consensus sequence, where it cleaves and resolves the cruciform DNA. This is Holliday junction branch migration complex subunit RuvA from Crocosphaera subtropica (strain ATCC 51142 / BH68) (Cyanothece sp. (strain ATCC 51142)).